A 312-amino-acid chain; its full sequence is Acetyl-coenzyme A carboxylase carboxyl transferase subunit alpha (312 aa).

Residues 36 to 286 (RLDKEVKSIY…KEYFLDALRT (251 aa)) enclose the CoA carboxyltransferase C-terminal domain.

Belongs to the AccA family. In terms of assembly, acetyl-CoA carboxylase is a heterohexamer composed of biotin carboxyl carrier protein (AccB), biotin carboxylase (AccC) and two subunits each of ACCase subunit alpha (AccA) and ACCase subunit beta (AccD).

The protein localises to the cytoplasm. The enzyme catalyses N(6)-carboxybiotinyl-L-lysyl-[protein] + acetyl-CoA = N(6)-biotinyl-L-lysyl-[protein] + malonyl-CoA. The protein operates within lipid metabolism; malonyl-CoA biosynthesis; malonyl-CoA from acetyl-CoA: step 1/1. In terms of biological role, component of the acetyl coenzyme A carboxylase (ACC) complex. First, biotin carboxylase catalyzes the carboxylation of biotin on its carrier protein (BCCP) and then the CO(2) group is transferred by the carboxyltransferase to acetyl-CoA to form malonyl-CoA. In Helicobacter pylori (strain ATCC 700392 / 26695) (Campylobacter pylori), this protein is Acetyl-coenzyme A carboxylase carboxyl transferase subunit alpha.